We begin with the raw amino-acid sequence, 573 residues long: Septation ring formation regulator EzrA (573 aa).

Residues 1–2 lie on the Extracellular side of the membrane; it reads MQ. The chain crosses the membrane as a helical span at residues 3–21; the sequence is VAIGIVVVAIVIYAAVKGF. The Cytoplasmic portion of the chain corresponds to 22–573; that stretch reads QFYIDKQVRQ…KQADKMNDEA (552 aa). Coiled-coil stretches lie at residues 100 to 188, 317 to 364, and 416 to 488; these read DAQQ…LAKA, LTHA…VYQA, and ETLQ…TLKE.

This sequence belongs to the EzrA family.

It is found in the cell membrane. Functionally, negative regulator of FtsZ ring formation; modulates the frequency and position of FtsZ ring formation. Inhibits FtsZ ring formation at polar sites. Interacts either with FtsZ or with one of its binding partners to promote depolymerization. The sequence is that of Septation ring formation regulator EzrA from Lactiplantibacillus plantarum (strain ATCC BAA-793 / NCIMB 8826 / WCFS1) (Lactobacillus plantarum).